The sequence spans 98 residues: Co-chaperonin GroES (98 aa).

Residues 32 to 56 form a disordered region; it reads NAKEKPQQGEVLAVGPGRRDDEGKR.

It belongs to the GroES chaperonin family. In terms of assembly, heptamer of 7 subunits arranged in a ring. Interacts with the chaperonin GroEL.

Its subcellular location is the cytoplasm. Its function is as follows. Together with the chaperonin GroEL, plays an essential role in assisting protein folding. The GroEL-GroES system forms a nano-cage that allows encapsulation of the non-native substrate proteins and provides a physical environment optimized to promote and accelerate protein folding. GroES binds to the apical surface of the GroEL ring, thereby capping the opening of the GroEL channel. The polypeptide is Co-chaperonin GroES (Bifidobacterium animalis subsp. lactis (strain AD011)).